A 610-amino-acid polypeptide reads, in one-letter code: E-selectin (610 aa).

Residues 1 to 21 (MIASQFLSALTLVLLIKESGA) form the signal peptide. Residues 22 to 139 (WSYNTSTEAM…CSKKKLALCY (118 aa)) enclose the C-type lectin domain. At 22-556 (WSYNTSTEAM…CEAPTESNIP (535 aa)) the chain is on the extracellular side. Residue Asn-25 is glycosylated (N-linked (GlcNAc...) asparagine). 5 disulfide bridges follow: Cys-40/Cys-138, Cys-111/Cys-130, Cys-143/Cys-154, Cys-148/Cys-163, and Cys-165/Cys-174. 3 residues coordinate Ca(2+): Glu-101, Asn-103, and Glu-109. A carbohydrate-binding positions include 101-109 (EPNNRQKDE), 113-118 (EIYIKR), and 126-128 (NDE). Asn-126 and Asp-127 together coordinate Ca(2+). Residues 140 to 175 (TAACTNTSCSGHGECVETINNYTCKCDPGFSGLKCE) form the EGF-like domain. Asn-145 and Asn-160 each carry an N-linked (GlcNAc...) asparagine glycan. Sushi domains are found at residues 178–239 (VNCT…ACNV), 240–301 (VECD…TCKA), 303–364 (TCRA…VCEA), 366–427 (QCTA…TCEA), 429–490 (RCDA…SCQV), and 491–549 (VKCS…TCEA). N-linked (GlcNAc...) asparagine glycans are attached at residues Asn-179, Asn-199, and Asn-203. 14 cysteine pairs are disulfide-bonded: Cys-180-Cys-224, Cys-193-Cys-206, Cys-210-Cys-237, Cys-242-Cys-286, Cys-255-Cys-268, Cys-272-Cys-299, Cys-304-Cys-349, Cys-335-Cys-362, Cys-367-Cys-412, Cys-398-Cys-425, Cys-430-Cys-475, Cys-461-Cys-488, Cys-493-Cys-534, and Cys-520-Cys-547. N-linked (GlcNAc...) asparagine glycosylation is present at Asn-265. Asn-312 and Asn-332 each carry an N-linked (GlcNAc...) asparagine glycan. 2 N-linked (GlcNAc...) asparagine glycosylation sites follow: Asn-503 and Asn-527. The helical transmembrane segment at 557–578 (LVAGLSAAGLSLLTLAPFLLWL) threads the bilayer. At 579 to 610 (RKCLRKAKKFVPASSCQSLESDGSYQKPSYIL) the chain is on the cytoplasmic side.

Belongs to the selectin/LECAM family. Interacts with SELPLG/PSGL1 and PODXL2 through the sialyl Lewis X epitope. SELPLG sulfation appears not to be required for this interaction.

The protein resides in the cell membrane. Its function is as follows. Cell-surface glycoprotein having a role in immunoadhesion. Mediates in the adhesion of blood neutrophils in cytokine-activated endothelium through interaction with SELPLG/PSGL1. May have a role in capillary morphogenesis. The sequence is that of E-selectin (SELE) from Homo sapiens (Human).